The primary structure comprises 76 residues: Vasotab (76 aa).

Residues 1-20 form the signal peptide; it reads MKFALFSVLVVLLIATFVAA. The Kazal-like domain maps to 21-76; that stretch reads DECPRICTADYRPVCGTPSGGRRSANRTFGNQCSLNAHNCLNKGDTYDKLHDGECK. 3 disulfide bridges follow: C23/C60, C27/C53, and C35/C75.

In terms of tissue distribution, expressed by the salivary gland.

It localises to the secreted. Its function is as follows. Vasodilator protein that inhibits vasoconstriction of isolated rat femoral artery induced by phenylephrine. Since platelet aggregation and vasoconstriction are key hemostatic responses, particularly in small wounds, this protein likely participates in the antihemostatic responses during blood feeding. Blocks L-type calcium channels (Cav1/CACNA1) in left ventricular myocytes isolated from rat hearts. The protein is Vasotab of Hybomitra bimaculata (Horse fly).